Reading from the N-terminus, the 204-residue chain is SOSS complex subunit B homolog (204 aa).

A DNA-binding region (OB) is located at residues 24–94 (IVLEVGVATV…TLYSGKNGEV (71 aa)). Residues 115-204 (RAEQQAVANP…GRGGLKGERR (90 aa)) are disordered. Low complexity-rich tracts occupy residues 122 to 131 (ANPAATPAGL) and 139 to 183 (GLPA…QTTT). The segment covering 187-198 (TRGGRGGGGRGG) has biased composition (gly residues).

The protein belongs to the SOSS-B family.

The polypeptide is SOSS complex subunit B homolog (Drosophila melanogaster (Fruit fly)).